Here is a 195-residue protein sequence, read N- to C-terminus: Segregation and condensation protein B (195 aa).

The disordered stretch occupies residues 169–195; it reads LEDVAASQENSREAGGRGSIPGHPGEE.

This sequence belongs to the ScpB family. As to quaternary structure, homodimer. Homodimerization may be required to stabilize the binding of ScpA to the Smc head domains. Component of a cohesin-like complex composed of ScpA, ScpB and the Smc homodimer, in which ScpA and ScpB bind to the head domain of Smc. The presence of the three proteins is required for the association of the complex with DNA.

The protein localises to the cytoplasm. Functionally, participates in chromosomal partition during cell division. May act via the formation of a condensin-like complex containing Smc and ScpA that pull DNA away from mid-cell into both cell halves. This is Segregation and condensation protein B from Moorella thermoacetica (strain ATCC 39073 / JCM 9320).